We begin with the raw amino-acid sequence, 499 residues long: Neuronal acetylcholine receptor subunit alpha-3 (499 aa).

Positions 1–25 (MGVVLLPPPLSMLMLVLMLLPAASA) are cleaved as a signal peptide. Residues 26–244 (SEAEHRLFQY…PLFYTINLII (219 aa)) are Extracellular-facing. N-linked (GlcNAc...) asparagine glycosylation is found at N49 and N166. 2 cysteine pairs are disulfide-bonded: C153-C167 and C217-C218. A helical transmembrane segment spans residues 245–260 (PCLLISFLTVLVFYLP). The Cytoplasmic segment spans residues 261-262 (SD). The helical transmembrane segment at 263 to 279 (CGEKVTLCISVLLSLTV) threads the bilayer. A Na(+)-binding site is contributed by E265. Topologically, residues 280 to 301 (FLLVITETIPSTSLVIPLIGEY) are extracellular. The helical transmembrane segment at 302–320 (LLFTMIFVTLSIVITVFVL) threads the bilayer. Topologically, residues 321–468 (NVHYRTPTTH…QDDWKYVAMV (148 aa)) are cytoplasmic. Phosphoserine is present on residues S407 and S410. Residues 469-487 (IDRIFLWVFILVCILGTAG) traverse the membrane as a helical segment. At 488 to 499 (LFLQPLMARDDT) the chain is on the extracellular side.

The protein belongs to the ligand-gated ion channel (TC 1.A.9) family. Acetylcholine receptor (TC 1.A.9.1) subfamily. Alpha-3/CHRNA3 sub-subfamily. Neuronal AChR is composed of two different types of subunits: alpha and beta. CHRNA3/Alpha-3 subunit can be combined to CHRNB2/beta-2 or CHRNB4/beta-4 to give rise to functional receptors. Part of a complex composed of STUB1/CHIP, VCP/p97, CHRNA3, and UBXN2A that modulates the ubiquitination and endoplasmic reticulum-associated degradation (ERAD) of CHRNA3. Within the complex UBXN2A acts as a scaffold protein required for the interaction of CHRNA3 with VCP/p97, this interaction also inhibits CHRNA3 ubiquitination by STUB1/CHIP and subsequently ERAD. Interacts with UBXN2A (via SEP domain), the interaction is required for the interaction of CHRNA3 in the STUB1:VCP:UBXN2A complex. Interacts with RIC3; which is required for proper folding and assembly. Ubiquitinated; by STUB1/CHIP and thereafter degraded by the 26S proteosome complex. As to expression, expressed in neurons. Expressed in umbrella cells of urothelium (at protein level).

The protein resides in the synaptic cell membrane. The protein localises to the cell membrane. Its subcellular location is the endoplasmic reticulum. It is found in the golgi apparatus. The catalysed reaction is Ca(2+)(in) = Ca(2+)(out). It catalyses the reaction K(+)(in) = K(+)(out). The enzyme catalyses Na(+)(in) = Na(+)(out). Its activity is regulated as follows. Activated by a myriad of ligands such as acetylcholine, cytisine, nicotine, choline and epibatidine. The heteropentamer CHRNA3:CHRNB2 activity is blocked by alpha-conotoxins ImI, ImII, PnIA, GID and MII. The heteropentamer CHRNA3:CHRNB4 activity is blocked by the alpha-conotoxin ImI and AuIB. Component of neuronal acetylcholine receptors (nAChRs) that function as pentameric, ligand-gated cation channels with high calcium permeability among other activities. nAChRs are excitatory neurotrasnmitter receptors formed by a collection of nAChR subunits known to mediate synaptic transmission in the nervous system and the neuromuscular junction. Each nAchR subunit confers differential attributes to channel properties, including activation, deactivation and desensitization kinetics, pH sensitivity, cation permeability, and binding to allosteric modulators. CHRNA3 forms heteropentameric neuronal acetylcholine receptors with CHRNB2 and CHRNB4. CHRNA3:CHRNB4 being predominant in neurons of the autonomic ganglia, it is known as ganglionic nicotinic receptor. CHRNA3:CHRNB4 also plays an important role in the habenulo-interpeduncular tract, modulating the mesolimbic dopamine system and affecting reward circuits and addiction. Hypothalamic CHRNA3:CHRNB4 nAChR activation by nicotine leads to activation of POMC neurons and a decrease in food intake. Also expressed in the urothelium where it modulates reflex bladder activity by increasing intracellular calcium through extracellular influx and basal ATP release. In Rattus norvegicus (Rat), this protein is Neuronal acetylcholine receptor subunit alpha-3 (Chrna3).